Here is a 391-residue protein sequence, read N- to C-terminus: GTPase HflX (391 aa).

Residues 162-181 form a disordered region; that stretch reads LAQQRGGAKGTRGASRGAGE. The region spanning 222–391 is the Hflx-type G domain; sequence KIGAIVGYTN…KITDIIIFDK (170 aa). GTP is bound by residues 228–235, 253–257, 278–281, 344–347, and 369–371; these read GYTNAGKS, FATLD, DTVG, NKMD, and SVT. Positions 235 and 255 each coordinate Mg(2+).

This sequence belongs to the TRAFAC class OBG-HflX-like GTPase superfamily. HflX GTPase family. In terms of assembly, monomer. Associates with the 50S ribosomal subunit. The cofactor is Mg(2+).

The protein localises to the cytoplasm. GTPase that associates with the 50S ribosomal subunit and may have a role during protein synthesis or ribosome biogenesis. The chain is GTPase HflX from Treponema denticola (strain ATCC 35405 / DSM 14222 / CIP 103919 / JCM 8153 / KCTC 15104).